Consider the following 150-residue polypeptide: 6,7-dimethyl-8-ribityllumazine synthase (150 aa).

5-amino-6-(D-ribitylamino)uracil is bound by residues phenylalanine 11, 43–45, and 67–69; these read VFD and AVI. 72-73 contributes to the (2S)-2-hydroxy-3-oxobutyl phosphate binding site; the sequence is AT. Histidine 75 (proton donor) is an active-site residue. Residue leucine 100 participates in 5-amino-6-(D-ribitylamino)uracil binding. Arginine 115 lines the (2S)-2-hydroxy-3-oxobutyl phosphate pocket.

It belongs to the DMRL synthase family.

It catalyses the reaction (2S)-2-hydroxy-3-oxobutyl phosphate + 5-amino-6-(D-ribitylamino)uracil = 6,7-dimethyl-8-(1-D-ribityl)lumazine + phosphate + 2 H2O + H(+). Its pathway is cofactor biosynthesis; riboflavin biosynthesis; riboflavin from 2-hydroxy-3-oxobutyl phosphate and 5-amino-6-(D-ribitylamino)uracil: step 1/2. Functionally, catalyzes the formation of 6,7-dimethyl-8-ribityllumazine by condensation of 5-amino-6-(D-ribitylamino)uracil with 3,4-dihydroxy-2-butanone 4-phosphate. This is the penultimate step in the biosynthesis of riboflavin. The protein is 6,7-dimethyl-8-ribityllumazine synthase of Pyrobaculum calidifontis (strain DSM 21063 / JCM 11548 / VA1).